The sequence spans 318 residues: Thymidylate synthase (318 aa).

DUMP contacts are provided by residues Arg-25 and 180–181; that span reads RR. Cys-200 acts as the Nucleophile in catalysis. Residues 220-223, Asn-231, and 261-263 contribute to the dUMP site; these read RSGD and HIY. Asp-223 contributes to the (6R)-5,10-methylene-5,6,7,8-tetrahydrofolate binding site. (6R)-5,10-methylene-5,6,7,8-tetrahydrofolate is bound at residue Ala-317.

Belongs to the thymidylate synthase family. Bacterial-type ThyA subfamily. As to quaternary structure, homodimer.

The protein resides in the cytoplasm. It catalyses the reaction dUMP + (6R)-5,10-methylene-5,6,7,8-tetrahydrofolate = 7,8-dihydrofolate + dTMP. It participates in pyrimidine metabolism; dTTP biosynthesis. In terms of biological role, catalyzes the reductive methylation of 2'-deoxyuridine-5'-monophosphate (dUMP) to 2'-deoxythymidine-5'-monophosphate (dTMP) while utilizing 5,10-methylenetetrahydrofolate (mTHF) as the methyl donor and reductant in the reaction, yielding dihydrofolate (DHF) as a by-product. This enzymatic reaction provides an intracellular de novo source of dTMP, an essential precursor for DNA biosynthesis. In Lactobacillus acidophilus (strain ATCC 700396 / NCK56 / N2 / NCFM), this protein is Thymidylate synthase.